A 229-amino-acid polypeptide reads, in one-letter code: uncharacterized protein (229 aa).

7 consecutive transmembrane segments (helical) span residues 21-41 (IYSL…LMLY), 56-76 (MIYY…SSAA), 83-103 (ALPI…FIIV), 109-129 (TVFQ…IIGV), 141-161 (AMFA…FIGS), 162-182 (GMMS…LIAS), and 202-222 (WAVA…ISLL).

It belongs to the BI1 family.

Its subcellular location is the cell membrane. This is an uncharacterized protein from Streptococcus pyogenes serotype M1.